We begin with the raw amino-acid sequence, 135 residues long: Large ribosomal subunit protein bL21 (135 aa).

The disordered stretch occupies residues 85–135; the sequence is YRVKRGHRQQYTQIEIESLNANGPASSDDEEAAETSDAEPDEDPEAEPAEA. The span at 93-107 shows a compositional bias: polar residues; sequence QQYTQIEIESLNANG. The segment covering 111-135 has biased composition (acidic residues); it reads SDDEEAAETSDAEPDEDPEAEPAEA.

This sequence belongs to the bacterial ribosomal protein bL21 family. Part of the 50S ribosomal subunit. Contacts protein L20.

In terms of biological role, this protein binds to 23S rRNA in the presence of protein L20. The sequence is that of Large ribosomal subunit protein bL21 from Salinibacter ruber (strain DSM 13855 / M31).